A 277-amino-acid polypeptide reads, in one-letter code: Phosphatidylglycerol--prolipoprotein diacylglyceryl transferase (277 aa).

Helical transmembrane passes span isoleucine 18–alanine 38, aspartate 54–phenylalanine 74, glutamate 91–alanine 111, and glycine 115–isoleucine 135. Arginine 137 contacts a 1,2-diacyl-sn-glycero-3-phospho-(1'-sn-glycerol). A run of 3 helical transmembrane segments spans residues glutamine 177–leucine 197, glycine 205–methionine 225, and leucine 236–tyrosine 256.

This sequence belongs to the Lgt family.

The protein localises to the cell membrane. The enzyme catalyses L-cysteinyl-[prolipoprotein] + a 1,2-diacyl-sn-glycero-3-phospho-(1'-sn-glycerol) = an S-1,2-diacyl-sn-glyceryl-L-cysteinyl-[prolipoprotein] + sn-glycerol 1-phosphate + H(+). It functions in the pathway protein modification; lipoprotein biosynthesis (diacylglyceryl transfer). Its function is as follows. Catalyzes the transfer of the diacylglyceryl group from phosphatidylglycerol to the sulfhydryl group of the N-terminal cysteine of a prolipoprotein, the first step in the formation of mature lipoproteins. The polypeptide is Phosphatidylglycerol--prolipoprotein diacylglyceryl transferase (Shouchella clausii (strain KSM-K16) (Alkalihalobacillus clausii)).